We begin with the raw amino-acid sequence, 1141 residues long: Serine-aspartate repeat-containing protein E (1141 aa).

Residues 1 to 52 (MINRDNKKAITKKGMISNRLNKFSIRKYTVGTASILVGTTLIFGLGNQEAKA) form the signal peptide. The short motif at 23–34 (FSIRKYTVGTAS) is the YSIRK-G/S signaling motif element. A ligand binding A region region spans residues 53–601 (AENTSTENAK…GDGTVKPEEK (549 aa)). Residues 54–225 (ENTSTENAKQ…SKEELKNNPE (172 aa)) are disordered. Positions 61–75 (AKQDDATTSDNKEVV) are enriched in basic and acidic residues. The span at 77 to 90 (EAENNSTTENDSTN) shows a compositional bias: low complexity. Over residues 92-109 (IKKETNTDSQPEAKEEST) the composition is skewed to basic and acidic residues. Residues 110–126 (KSSTQQQQNNVTATTET) show a composition bias toward low complexity. Residues 130 to 145 (NIEKENVKPSTDKTAT) show a composition bias toward basic and acidic residues. Polar residues predominate over residues 158 to 207 (PNNTNNDVTTKPSTSEIQTKPTTPQESTNIENSQPQPTPSKVDNQVTDAT). Over residues 216–225 (SKEELKNNPE) the composition is skewed to basic and acidic residues. 3 consecutive CNA-B domains span residues 602-714 (LYKI…YKEP), 715-824 (KYNL…YKTP), and 825-935 (KYSL…EEDT). The disordered stretch occupies residues 899-1117 (VTNTTEDDKD…GSENNGSNNA (219 aa)). Acidic residues-rich tracts occupy residues 903–913 (TEDDKDADGGE) and 930–1080 (YFEE…DSDS). The LPXTG sorting signal signature appears at 1104-1108 (LPETG). Thr1107 is subject to Pentaglycyl murein peptidoglycan amidated threonine. Residues 1108–1141 (GSENNGSNNATLFGGLFAALGSLLLFGRRKKQNK) constitute a propeptide, removed by sortase.

The protein belongs to the serine-aspartate repeat-containing protein (SDr) family. Interacts with host complement factor H/CFAH (via C-terminus). Interacts with host complement regulator C4BPA.

The protein localises to the secreted. Its subcellular location is the cell wall. Functionally, cell surface-associated calcium-binding protein which plays an important role in adhesion and pathogenesis. Contributes to the resistance to killing by innate immune components in blood and thus attenuates bacterial clearance by interacting with host complement factor H/CFAH and modulating its activity. Also inhibits bacterial opsonization and killing by interacting with host complement regulator C4BPA and thus inhibiting classical complement pathway activation. The polypeptide is Serine-aspartate repeat-containing protein E (sdrE) (Staphylococcus aureus (strain MSSA476)).